The sequence spans 456 residues: MEPNNHHDGLNGQKADNPLEVAIVGGGLTGLALALGLLRRNVNFTIYERAASFGELGVGIHFTPNAERAMKALDPRILQSYVDVATHAEGGFLSFVDGLHDDDLLFQLRMGEGYKAARRCDIVSQLVKHIPQERVQLLKWLQSVEEDAEGRAVLTFRDGSTAKADVVVGCDGIRSQVRSAMFGSGPSAPRAQYAHQLAFRGLVPMAKVAATLGPEKTSRAIGYLGPGGFVLSVPLAGINMMHLEVFVMDPLPWSDDTTGSKPDKDKDEDDVKRYVLPSTRAEAEKAFTEFNPTVRSLISLLPEELGKWAIFDMLDSPAPSYALGRMCLAGDAAHASTPNQGGGAGAGMEDSLVLAEILAALADRAKSGARVGSWEISEGLKIYSDARYERAQWLVQSSRRVAQLFTRKKGAGQGGEEEEPISREILERSHQLWDYDVDAAVEEALGKLRAKVLEKH.

A helical membrane pass occupies residues 18–38 (PLEVAIVGGGLTGLALALGLL). Asn43 carries N-linked (GlcNAc...) asparagine glycosylation. Residues Glu48 and Arg119 each coordinate FAD. The active site involves Arg200. 2 residues coordinate FAD: Asp331 and Ala344.

The protein belongs to the paxM FAD-dependent monooxygenase family. The cofactor is FAD.

The protein localises to the membrane. It participates in secondary metabolite biosynthesis. Its function is as follows. FAD-dependent monooxygenase; part of the SOR gene cluster that mediates the biosynthesis of sorbicillinoids, a diverse group of yellow secondary metabolites that restrict growth of competing pathogenic fungi but not of bacteria. Sorbicillinoids biosynthesis requires the action of two PKSs. The SOR cluster is required for the production of trichodimerol and dihydrotrichotetronin, with sor2 being sufficient for production of trichodimerol, but not dihydrotrichotetronin in the light. Sor1 iteratively combines three acetyl units and the growing chain is modified by the ketoacyl reductase subunit, and optional by the enoyl reductase subunit in the second cycle. The polyketide is then handed over to the PKS sor2, which adds three more acetyl units, and two methyl groups. Sor2 releases an aldehyde, which undergoes spontaneous cyclization resulting in the formation of sorbicillin or 2',3'-dihydrosorbicillin. The monooxygenase sor5 oxidizes sorbicillin and 2',3'-dihydrosorbicillin to 2',3'-dihydrosorbicillinol and sorbicillinol, respectively. The oxidoreductase sor8 further converts sorbicillinol into oxosorbicillinol. Sorbicillinol is the building block for the other sorbicillinoids such as disorbicillinol, bisvertinolon, dihydrobisvertinolone, and dihydrotrichotetronine. This is FAD-dependent monooxygenase sor5 from Hypocrea jecorina (strain QM6a) (Trichoderma reesei).